The chain runs to 409 residues: Microfibrillar-associated protein 3-like (409 aa).

The first 28 residues, 1–28 (MGLQKSHLTVCLPPSVPFLILVSTLATA), serve as a signal peptide directing secretion. Topologically, residues 29–148 (KSVTNSTLNG…TLRVIFTSGD (120 aa)) are extracellular. 5 N-linked (GlcNAc...) asparagine glycosylation sites follow: asparagine 33, asparagine 37, asparagine 67, asparagine 111, and asparagine 135. The 95-residue stretch at 47–141 (PVIIARTDHI…GTINNTVTLR (95 aa)) folds into the Ig-like C2-type domain. Cysteine 68 and cysteine 125 are disulfide-bonded. Residues 149–169 (MGVYYMVVCLVAFTIVMILNI) traverse the membrane as a helical segment. The Cytoplasmic portion of the chain corresponds to 170–409 (TRLCMMSSHL…NTCIIYESHV (240 aa)). Tyrosine 287 carries the phosphotyrosine modification. A phosphoserine mark is found at serine 298, serine 303, serine 306, and serine 307. The interval 319 to 395 (VSVHPQSKRD…AHLETTEPAV (77 aa)) is disordered. Residues 325–340 (SKRDHVDDQEGGHFEV) show a composition bias toward basic and acidic residues. Low complexity predominate over residues 356-373 (TAEPSTDITTTELTSEET).

The protein localises to the cell membrane. The protein resides in the nucleus. It is found in the cytoplasm. In terms of biological role, may participate in the nuclear signaling of EGFR and MAPK1/ERK2. The polypeptide is Microfibrillar-associated protein 3-like (Mfap3l) (Mus musculus (Mouse)).